The following is a 364-amino-acid chain: 4-hydroxythreonine-4-phosphate dehydrogenase (364 aa).

Residues His-148 and Thr-149 each coordinate substrate. 3 residues coordinate a divalent metal cation: His-177, His-216, and His-301. Positions 309, 318, and 327 each coordinate substrate.

Belongs to the PdxA family. As to quaternary structure, homodimer. Zn(2+) serves as cofactor. The cofactor is Mg(2+). It depends on Co(2+) as a cofactor.

It localises to the cytoplasm. It carries out the reaction 4-(phosphooxy)-L-threonine + NAD(+) = 3-amino-2-oxopropyl phosphate + CO2 + NADH. It participates in cofactor biosynthesis; pyridoxine 5'-phosphate biosynthesis; pyridoxine 5'-phosphate from D-erythrose 4-phosphate: step 4/5. Functionally, catalyzes the NAD(P)-dependent oxidation of 4-(phosphooxy)-L-threonine (HTP) into 2-amino-3-oxo-4-(phosphooxy)butyric acid which spontaneously decarboxylates to form 3-amino-2-oxopropyl phosphate (AHAP). The chain is 4-hydroxythreonine-4-phosphate dehydrogenase from Campylobacter jejuni subsp. jejuni serotype O:2 (strain ATCC 700819 / NCTC 11168).